The following is an 880-amino-acid chain: Replication origin-binding protein (880 aa).

The Helicase ATP-binding domain occupies 60–225; it reads PLPIRTKPVL…AELRGAENVH (166 aa). Position 73–80 (73–80) interacts with ATP; it reads APMGSGKT. Residues 260-287 are disordered; the sequence is PPAGDESREASASQPPPHDSSNEPCAPE.

It belongs to the herpesviridae OriBP family. Homodimer. Interacts with the major DNA-binding protein. Interacts with the DNA helicase/primase complex-associated protein and the polymerase accessory protein.

It localises to the host nucleus. Functions as a docking protein to recruit essential components of the viral replication machinery to viral DNA origins. In the presence of the major DNA-binding protein, opens dsDNA leading to a conformational change in the origin that facilitates DNA unwinding and subsequent replication. The sequence is that of Replication origin-binding protein (UL9) from Psittacid herpesvirus 1 (isolate Amazon parrot/-/97-0001/1997) (PsHV-1).